The following is a 194-amino-acid chain: uncharacterized protein (194 aa).

The tract at residues 62 to 93 is disordered; the sequence is GGAGRRTSKAQRVHPQPSHQRQPPPPQHPGPY.

In terms of tissue distribution, expressed most abundantly in the brain at protein level. Present in cortex, cerebellum and midbrain. Found in neurons. Elevated expressions detected in Alzheimer brain samples. Also expressed in testis.

It localises to the cytoplasm. This is an uncharacterized protein from Homo sapiens (Human).